The chain runs to 412 residues: MNILSAIIVFENLHEVKRLFHWGPIIALTVIGVCSSMAILDSIIWYWPLDTTGGSINFIMLINWTVLILYNYFNAMFVGPGYIPLEWKPEKQQDIMYLQFCRLCQGYKAPRSHHCRKCNRCVMKMDHHCPWINNCCGHLNHAYFTSFLLLAPLGCIHAALIFIMTMYTQLYDRISFGWSSVKIDMSAARHIHHPIMPFSIAAFAATLFALGLALGTTIAVGMLFFIQMKVILRNRTSIEAWIEEKAKDRIQYYQTGEDFIFPYDLGSRWENFKQVFTWSGAPMGDGIEWPVHEKCDQYTLTIEQLKQKHDKRQRSVEYRVVEEYNGACCPLGKGLNTFFRTPCTEEPRIKLTKGETIFATRGTKWWMYGDKVLNEEQAKAGVRIRGWFPRRCVEKCLYDSANNSTSEEKKEQ.

Over M1–P24 the chain is Cytoplasmic. A helical transmembrane segment spans residues I25 to W45. The Lumenal segment spans residues Y46–N57. Residues F58 to V78 traverse the membrane as a helical segment. The Cytoplasmic portion of the chain corresponds to G79–Y143. The DHHC domain occupies Q99–L149. C129 (S-palmitoyl cysteine intermediate) is an active-site residue. Residues F144–M164 traverse the membrane as a helical segment. Residues T165 to A205 lie on the Lumenal side of the membrane. The chain crosses the membrane as a helical span at residues T206–I226. The Cytoplasmic segment spans residues Q227–Q412. The region spanning Q313–Y398 is the SH3 domain. S-palmitoyl cysteine attachment occurs at residues C328, C329, and C343. The short motif at K409–Q412 is the Di-lysine motif element.

This sequence belongs to the DHHC palmitoyltransferase family.

It localises to the endoplasmic reticulum membrane. It catalyses the reaction L-cysteinyl-[protein] + hexadecanoyl-CoA = S-hexadecanoyl-L-cysteinyl-[protein] + CoA. The catalysed reaction is L-cysteinyl-[protein] + octadecanoyl-CoA = S-octadecanoyl-L-cysteinyl-[protein] + CoA. Its function is as follows. Endoplasmic reticulum palmitoyl acyltransferase that probably catalyzes the addition of palmitate onto various protein substrates and is involved in a variety of cellular processes. Could also function as a stearoyltransferase. This is Palmitoyltransferase ZDHHC6 from Danio rerio (Zebrafish).